Consider the following 819-residue polypeptide: Leucine--tRNA ligase (819 aa).

The 'HIGH' region signature appears at 40–51 (PYPSGAGLHVGH). The short motif at 600 to 604 (KMSKS) is the 'KMSKS' region element. Residue Lys-603 coordinates ATP.

It belongs to the class-I aminoacyl-tRNA synthetase family.

Its subcellular location is the cytoplasm. It carries out the reaction tRNA(Leu) + L-leucine + ATP = L-leucyl-tRNA(Leu) + AMP + diphosphate. This Chlamydia trachomatis serovar L2 (strain ATCC VR-902B / DSM 19102 / 434/Bu) protein is Leucine--tRNA ligase.